The following is a 745-amino-acid chain: Phosphoribosylformylglycinamidine synthase subunit PurL (745 aa).

Residue His-41 is part of the active site. ATP contacts are provided by Tyr-44 and Lys-83. Glu-85 is a binding site for Mg(2+). Residues 86-89 and Arg-108 each bind substrate; that span reads SHNH. His-87 acts as the Proton acceptor in catalysis. Asp-109 provides a ligand contact to Mg(2+). Gln-232 contributes to the substrate binding site. A Mg(2+)-binding site is contributed by Asp-260. Substrate is bound at residue 304–306; that stretch reads ESQ. The ATP site is built by Asp-494 and Gly-531. Asn-532 lines the Mg(2+) pocket. Ser-534 contributes to the substrate binding site.

Belongs to the FGAMS family. In terms of assembly, monomer. Part of the FGAM synthase complex composed of 1 PurL, 1 PurQ and 2 PurS subunits.

The protein resides in the cytoplasm. The catalysed reaction is N(2)-formyl-N(1)-(5-phospho-beta-D-ribosyl)glycinamide + L-glutamine + ATP + H2O = 2-formamido-N(1)-(5-O-phospho-beta-D-ribosyl)acetamidine + L-glutamate + ADP + phosphate + H(+). The protein operates within purine metabolism; IMP biosynthesis via de novo pathway; 5-amino-1-(5-phospho-D-ribosyl)imidazole from N(2)-formyl-N(1)-(5-phospho-D-ribosyl)glycinamide: step 1/2. Its function is as follows. Part of the phosphoribosylformylglycinamidine synthase complex involved in the purines biosynthetic pathway. Catalyzes the ATP-dependent conversion of formylglycinamide ribonucleotide (FGAR) and glutamine to yield formylglycinamidine ribonucleotide (FGAM) and glutamate. The FGAM synthase complex is composed of three subunits. PurQ produces an ammonia molecule by converting glutamine to glutamate. PurL transfers the ammonia molecule to FGAR to form FGAM in an ATP-dependent manner. PurS interacts with PurQ and PurL and is thought to assist in the transfer of the ammonia molecule from PurQ to PurL. This Aquifex aeolicus (strain VF5) protein is Phosphoribosylformylglycinamidine synthase subunit PurL.